The primary structure comprises 447 residues: Probable glycine dehydrogenase (decarboxylating) subunit 1 (447 aa).

This sequence belongs to the GcvP family. N-terminal subunit subfamily. In terms of assembly, the glycine cleavage system is composed of four proteins: P, T, L and H. In this organism, the P 'protein' is a heterodimer of two subunits.

It carries out the reaction N(6)-[(R)-lipoyl]-L-lysyl-[glycine-cleavage complex H protein] + glycine + H(+) = N(6)-[(R)-S(8)-aminomethyldihydrolipoyl]-L-lysyl-[glycine-cleavage complex H protein] + CO2. Its function is as follows. The glycine cleavage system catalyzes the degradation of glycine. The P protein binds the alpha-amino group of glycine through its pyridoxal phosphate cofactor; CO(2) is released and the remaining methylamine moiety is then transferred to the lipoamide cofactor of the H protein. The chain is Probable glycine dehydrogenase (decarboxylating) subunit 1 from Bacillus cereus (strain ATCC 10987 / NRS 248).